The chain runs to 136 residues: MLARMSGPDPAPAALPTVLALDVSKSRIGFAVSAGRLAFGRGSVDRKRLPLDLKAVRLKVEETGAERLVLGLPLRTDGKPSPTADRVRAFGRVLMDKGYTVEYQDERFTTQRARALGAADEDEAAAVQILELWLMR.

Belongs to the YqgF nuclease family. As to quaternary structure, monomer; also forms low amounts of dimers. Mn(2+) serves as cofactor.

Its subcellular location is the cytoplasm. Its function is as follows. Has robust sequence-specific RNase activity, acting as a 5'-3' exo/endonuclease on ssRNA substrates with minimally 3 consecutive adenine bases. Has no detectable nuclease activity on dsRNA, dsDNA or Holliday junction DNA. The protein is Ribonuclease YqgF of Deinococcus radiodurans (strain ATCC 13939 / DSM 20539 / JCM 16871 / CCUG 27074 / LMG 4051 / NBRC 15346 / NCIMB 9279 / VKM B-1422 / R1).